A 623-amino-acid polypeptide reads, in one-letter code: 1-butanol dehydrogenase (quinone) (623 aa).

A signal peptide spans 1–28 (MKKSHAKPFALRAIVVATAAALSLPAAA). Residues Asp40, Thr43, and Asp46 each coordinate Ca(2+). Glu90 is a binding site for pyrroloquinoline quinone. Cys134 and Cys135 are joined by a disulfide. Pyrroloquinoline quinone-binding positions include Arg140, Thr184, and 202-204 (HGS). Residue Glu208 coordinates Ca(2+). The segment at 235–274 (HMGRLNGKDSTPTGDPKAPSWPDDPNSPTGKVEAWSQGGG) is disordered. 2 residues coordinate Ca(2+): Asn295 and Asp345. Asp345 serves as the catalytic Proton acceptor. Residue Arg374 coordinates pyrroloquinoline quinone. Positions 420–440 (GKPIEKDNRPPQPKEGADKGE) are disordered. Ala592 contacts pyrroloquinoline quinone.

The protein belongs to the bacterial PQQ dehydrogenase family. Requires pyrroloquinoline quinone as cofactor. The cofactor is Ca(2+).

The protein localises to the periplasm. The catalysed reaction is butan-1-ol + a quinone = butanal + a quinol. Functionally, involved in the metabolism of butane. May function primarily in energy generation. Catalyzes the oxidation of 1-butanol to 1-butanal. Also able to use 2-butanol and butyraldehyde, although the affinity is comparatively low. This chain is 1-butanol dehydrogenase (quinone), found in Thauera butanivorans (strain ATCC 43655 / DSM 2080 / JCM 20651 / CCUG 51053 / NBRC 103042 / IAM 12574 / Bu B1211) (Pseudomonas butanovora).